The following is a 303-amino-acid chain: D-alanine--D-alanine ligase (303 aa).

Residues Lys-104–Glu-300 enclose the ATP-grasp domain. Residue Ile-132 to Ser-187 coordinates ATP. Asp-254, Glu-267, and Asn-269 together coordinate Mg(2+).

The protein belongs to the D-alanine--D-alanine ligase family. Mg(2+) is required as a cofactor. It depends on Mn(2+) as a cofactor.

Its subcellular location is the cytoplasm. It catalyses the reaction 2 D-alanine + ATP = D-alanyl-D-alanine + ADP + phosphate + H(+). It functions in the pathway cell wall biogenesis; peptidoglycan biosynthesis. Cell wall formation. In Actinobacillus pleuropneumoniae serotype 5b (strain L20), this protein is D-alanine--D-alanine ligase.